The sequence spans 70 residues: Small ribosomal subunit protein bS21 (70 aa).

The protein belongs to the bacterial ribosomal protein bS21 family.

This chain is Small ribosomal subunit protein bS21, found in Campylobacter fetus subsp. fetus (strain 82-40).